Consider the following 497-residue polypeptide: Lysine--tRNA ligase (497 aa).

2 residues coordinate Mg(2+): Glu-406 and Glu-413.

This sequence belongs to the class-II aminoacyl-tRNA synthetase family. As to quaternary structure, homodimer. Requires Mg(2+) as cofactor.

Its subcellular location is the cytoplasm. It carries out the reaction tRNA(Lys) + L-lysine + ATP = L-lysyl-tRNA(Lys) + AMP + diphosphate. In Rhizobium leguminosarum bv. trifolii (strain WSM2304), this protein is Lysine--tRNA ligase.